Consider the following 782-residue polypeptide: MADHDVHTAEAVIDNGSFGVRTVRFETGRLARQAGGSAVAYLGDTMVLSATTASKEPREQFDFFPLTVDVEERLYAAGRIPGSFFRREGRPSEEAILTCRLIDRPLRPSFVKGLRNEVQVVVTVLAVDPEHLYDVVAINAASMSTLLAGLPFSGPIGGVRMAHIDGTWVAFPTYSELERATFDMVVAGRVLPDGDVAIMMVEAEATEETIPLIREGAPAPTEEVVAGGLEAAKPFIRTLCAAQSELAARAAKPVTEFPLFRDYEDDVYDAVAATVRDDVARALTIAGKQEREAALDEVANTALGRLGERFAGREKEILAALRALTKKLVRERIIREKVRIDGRGLTDIRPLTAEVGIVPRVHGSALFERGETQILGVTTLNMLRMEQQLDTVSPRTKKRYMHHYNFPPYSTGEVGRVGSPKRREIGHGALAERALIPVLPSREEFPYAIRQVSEAIGSNGSTSMGSVCASTLSLLNAGVPLRAPVAGIAMGLISDTVDGETHYVTLTDILGAEDAYGDMDFKVAGTRDFVTALQLDTKLDGIPASVLAAALPQAREARLTILDVMAKAISEPAPMSPYAPRIITIKIPVDQIGAVIGPKGKIINQIQDDTGAEITIEDDGTIYIGATEGTAAEAARAAISAIANPQLPEVGERYLGTVVKATPFGVFVSLLPGKDGLLHISELRKMAGGRRVENVEDVLKVGDKIQVEIRDIDARGKLSLVPVDVPGAVLAEDAGAGESAASGGAPRSAGGPQPREHQGPGRPRGRGGDHGGEGRQRTRRRH.

Mg(2+)-binding residues include aspartate 514 and aspartate 520. Residues 580–639 (PRIITIKIPVDQIGAVIGPKGKIINQIQDDTGAEITIEDDGTIYIGATEGTAAEAARAAI) form the KH domain. Residues 651–723 (GERYLGTVVK…ARGKLSLVPV (73 aa)) enclose the S1 motif domain. Over residues 734–753 (AGAGESAASGGAPRSAGGPQ) the composition is skewed to low complexity. The segment at 734 to 782 (AGAGESAASGGAPRSAGGPQPREHQGPGRPRGRGGDHGGEGRQRTRRRH) is disordered. The span at 766 to 776 (RGGDHGGEGRQ) shows a compositional bias: basic and acidic residues.

This sequence belongs to the polyribonucleotide nucleotidyltransferase family. It depends on Mg(2+) as a cofactor.

It localises to the cytoplasm. The catalysed reaction is RNA(n+1) + phosphate = RNA(n) + a ribonucleoside 5'-diphosphate. Its function is as follows. Involved in mRNA degradation. Catalyzes the phosphorolysis of single-stranded polyribonucleotides processively in the 3'- to 5'-direction. The protein is Polyribonucleotide nucleotidyltransferase of Acidothermus cellulolyticus (strain ATCC 43068 / DSM 8971 / 11B).